A 389-amino-acid polypeptide reads, in one-letter code: ATP phosphoribosyltransferase regulatory subunit (389 aa).

Belongs to the class-II aminoacyl-tRNA synthetase family. HisZ subfamily. In terms of assembly, heteromultimer composed of HisG and HisZ subunits.

Its subcellular location is the cytoplasm. Its pathway is amino-acid biosynthesis; L-histidine biosynthesis; L-histidine from 5-phospho-alpha-D-ribose 1-diphosphate: step 1/9. Its function is as follows. Required for the first step of histidine biosynthesis. May allow the feedback regulation of ATP phosphoribosyltransferase activity by histidine. In Moorella thermoacetica (strain ATCC 39073 / JCM 9320), this protein is ATP phosphoribosyltransferase regulatory subunit.